Here is a 153-residue protein sequence, read N- to C-terminus: Ribosome maturation factor RimP (153 aa).

Belongs to the RimP family.

Its subcellular location is the cytoplasm. Required for maturation of 30S ribosomal subunits. This chain is Ribosome maturation factor RimP, found in Clostridium botulinum (strain ATCC 19397 / Type A).